The primary structure comprises 711 residues: Polyribonucleotide nucleotidyltransferase (711 aa).

Mg(2+)-binding residues include D486 and D492. A KH domain is found at 553 to 612 (PRIHTIKISTDKIKDVIGKGGSVIRALTEETGTTIEIEDDGTVKIAATDGEKAKYAIRRI). Positions 622–690 (GRIYNSKVTR…RQGRVRLSIK (69 aa)) constitute an S1 motif domain. The interval 689 to 711 (IKEATEQSQPAAAPEAPASEQAE) is disordered. Positions 694–711 (EQSQPAAAPEAPASEQAE) are enriched in low complexity.

This sequence belongs to the polyribonucleotide nucleotidyltransferase family. As to quaternary structure, component of the RNA degradosome, which is a multiprotein complex involved in RNA processing and mRNA degradation. Mg(2+) is required as a cofactor.

It localises to the cytoplasm. The enzyme catalyses RNA(n+1) + phosphate = RNA(n) + a ribonucleoside 5'-diphosphate. Functionally, involved in mRNA degradation. Catalyzes the phosphorolysis of single-stranded polyribonucleotides processively in the 3'- to 5'-direction. This Salmonella typhi protein is Polyribonucleotide nucleotidyltransferase.